The primary structure comprises 106 residues: UPF0145 protein Pput_2816 (106 aa).

The protein belongs to the UPF0145 family.

The protein is UPF0145 protein Pput_2816 of Pseudomonas putida (strain ATCC 700007 / DSM 6899 / JCM 31910 / BCRC 17059 / LMG 24140 / F1).